We begin with the raw amino-acid sequence, 205 residues long: Syndecan 4-B (205 aa).

The N-terminal stretch at 1-17 is a signal peptide; it reads MNRLLLLLALVLSGVAA. The Extracellular segment spans residues 18-162; it reads ESIRETETMD…FFQRTEVIVA (145 aa). The interval 26-113 is disordered; that stretch reads MDPTSMLEYE…HDFDETKTGR (88 aa). Residues Ser-37, Ser-73, and Ser-75 are each glycosylated (O-linked (Xyl...) (glycosaminoglycan) serine). A compositionally biased stretch (acidic residues) spans 44–94; it reads VFVDEDDDDDYEDGVDYEIDSESDNDEDYSGSGDDDFDDEDNVEDEDEEET. Positions 102–113 are enriched in basic and acidic residues; that stretch reads PEHDFDETKTGR. The helical transmembrane segment at 163–183 threads the bilayer; sequence IIAGTLVGLVVAVSFIVFLVI. Residues 184–205 are Cytoplasmic-facing; that stretch reads RRNQNGDLVKKPIYKKTSTMEV.

The protein belongs to the syndecan proteoglycan family. In terms of assembly, interacts with the Wnt receptor fzd7 and its signal transducer dvl2/dsh. O-glycosylated; contains both chondroitin sulfate and heparan sulfate. Ser-37, Ser-73 and Ser-75 can all be modified by either chondroitin sulfate or heparan sulfate, and the protein exists in forms that contain only chondroitin sulfate, only heparan sulfate and both chondroitin sulfate and heparan sulfate. Expressed in the animal hemisphere from the 4-cell to the blastula stage. During gastrulation, expressed in the involuting dorsal mesoderm and ectoderm. After involution, localized mainly to the anterior neuroectoderm. At later stages, expressed in the brain, branchial arches, pronephros, tailbud, and at low levels in the somites.

Its subcellular location is the membrane. Its function is as follows. Cell surface proteoglycan. Regulates non-canonical Wnt signaling, being necessary and sufficient for fibronectrin-mediated translocation of dvl2/dsh to the plasma membrane. Required for proper convergent extension movements during gastrulation, which shape the neural plate, and for subsequent neural tube closure. This Xenopus laevis (African clawed frog) protein is Syndecan 4-B (sdc4-b).